Consider the following 321-residue polypeptide: Fibronectin type III domain-containing protein 8 (321 aa).

The region spanning 175–277 (VPEAPFVCEH…KPYKFATVAT (103 aa)) is the Fibronectin type-III domain.

The chain is Fibronectin type III domain-containing protein 8 (FNDC8) from Bos taurus (Bovine).